The following is a 198-amino-acid chain: Heat shock 70 kDa protein (198 aa).

Residues Gly170–Gly191 show a composition bias toward gly residues. The interval Gly170–Asp198 is disordered.

This sequence belongs to the heat shock protein 70 family.

The sequence is that of Heat shock 70 kDa protein from Schistosoma japonicum (Blood fluke).